We begin with the raw amino-acid sequence, 361 residues long: Phenylalanine--tRNA ligase alpha subunit (361 aa).

Glu260 provides a ligand contact to Mg(2+).

This sequence belongs to the class-II aminoacyl-tRNA synthetase family. Phe-tRNA synthetase alpha subunit type 1 subfamily. In terms of assembly, tetramer of two alpha and two beta subunits. The cofactor is Mg(2+).

The protein resides in the cytoplasm. It carries out the reaction tRNA(Phe) + L-phenylalanine + ATP = L-phenylalanyl-tRNA(Phe) + AMP + diphosphate + H(+). This is Phenylalanine--tRNA ligase alpha subunit from Bartonella quintana (strain Toulouse) (Rochalimaea quintana).